Consider the following 233-residue polypeptide: Flagellar calcium-binding protein TB-17 (233 aa).

Residues 1–11 (MGCSGSKNASN) are compositionally biased toward polar residues. The disordered stretch occupies residues 1-29 (MGCSGSKNASNPKDGAASKGGKDGKTTAD). Positions 20–29 (GGKDGKTTAD) are enriched in basic and acidic residues. EF-hand domains lie at 48-83 (ESKS…ILKL), 130-165 (YDIF…LKEW), and 167-202 (VDIT…KKLQ). The Ca(2+) site is built by D61, N63, T65, K67, E72, D143, D145, S147, E154, D180, N182, S184, and E191. The segment at 203 to 233 (VSGDPDDEENGANEGDGANAGDGVPAAEGSA) is disordered. Residues 214 to 225 (ANEGDGANAGDG) are compositionally biased toward low complexity.

It belongs to the calflagin family.

The protein localises to the cell projection. It is found in the cilium. The protein resides in the flagellum. Functionally, may contribute to the rapid motility of the trypanosomes, playing a role either in flagellar structure or in calcium metabolism. Could alternate between a GDP-bound inactive form to a calcium/GTP-bound active form. The polypeptide is Flagellar calcium-binding protein TB-17 (FCABP) (Trypanosoma brucei brucei).